The sequence spans 51 residues: Suberization-associated anionic peroxidase 1 (51 aa).

Position 30 (His30) interacts with heme. Thr31 contributes to the Ca(2+) binding site.

This sequence belongs to the peroxidase family. Classical plant (class III) peroxidase subfamily. It depends on heme b as a cofactor. The cofactor is Ca(2+).

It localises to the secreted. It catalyses the reaction 2 a phenolic donor + H2O2 = 2 a phenolic radical donor + 2 H2O. Removal of H(2)O(2), oxidation of toxic reductants, biosynthesis and degradation of lignin, suberization, auxin catabolism, response to environmental stresses such as wounding, pathogen attack and oxidative stress. These functions might be dependent on each isozyme/isoform in each plant tissue. Functionally, suggested to catalyze the deposition of the aromatic residues of suberin on the cell wall and thus play a role in cell-suberization. This is Suberization-associated anionic peroxidase 1 from Capsicum annuum (Capsicum pepper).